Here is a 101-residue protein sequence, read N- to C-terminus: Small integral membrane protein 21 (101 aa).

The helical transmembrane segment at 49–65 (HIRFFTLLVLFHVMVLL) threads the bilayer.

The protein localises to the membrane. The chain is Small integral membrane protein 21 (SMIM21) from Homo sapiens (Human).